The chain runs to 523 residues: Synaptotagmin-10 (523 aa).

Residues 1–55 (MSFHKEDGVNSLCQKALHIVTELCFAGQVEWEKCSGIFPRDRGSQGGSSTDISVS) are Vesicular-facing. Positions 13–35 (CQKALHIVTELCFAGQVEWEKCS) are cysteine motif. Residues 56–76 (LLAVVVSFCGLALLVVSLFVF) traverse the membrane as a helical segment. At 77-523 (WKLCWPCWKS…CPSPKPPSTP (447 aa)) the chain is on the cytoplasmic side. Phosphothreonine is present on Thr-136. C2 domains follow at residues 231 to 352 (ICGK…TVWK) and 363 to 496 (DLGE…THWH). Asp-262, Asp-268, Asp-320, Phe-321, Asp-322, Ser-325, Asp-328, Asp-394, Asp-400, Asp-454, and Asp-456 together coordinate Ca(2+).

This sequence belongs to the synaptotagmin family. In terms of assembly, homodimer; disulfide-linked via the cysteine motif. Can also form heterodimers with SYT3, SYT6, SYT7 and SYT9. Requires Ca(2+) as cofactor. Expressed only in pancreas, lung and kidney.

The protein resides in the cytoplasmic vesicle. It localises to the secretory vesicle membrane. Functionally, ca(2+) sensor specifically required for the Ca(2+)-dependent exocytosis of secretory vesicles containing IGF1 in neurons of the olfactory bulb. Exocytosis of IGF1 is required for sensory perception of smell. Not involved in Ca(2+)-dependent synaptic vesicle exocytosis. Acts through Ca(2+) and phospholipid binding to the C2 domain: Ca(2+) induces binding of the C2-domains to phospholipid membranes and to assembled SNARE-complexes; both actions contribute to triggering exocytosis. The protein is Synaptotagmin-10 (SYT10) of Homo sapiens (Human).